The chain runs to 907 residues: Lipoxygenase 1, chloroplastic (907 aa).

The transit peptide at 1-49 (MALAKQIMGASLMDQKTSVFGSNLCLNHVLVNKHRLRLRKTRKNGSMVV) directs the protein to the chloroplast. The 125-residue stretch at 85–209 (DFFKDTIFRK…DLPNPRIFFT (125 aa)) folds into the PLAT domain. The region spanning 212-907 (PYLPDETPVG…CRGVPNSISI (696 aa)) is the Lipoxygenase domain. Residues histidine 567, histidine 572, histidine 758, asparagine 762, and isoleucine 907 each coordinate Fe cation.

It belongs to the lipoxygenase family. Fe cation is required as a cofactor. As to expression, confined to glandular trichomes in flowers, and, at low levels, in leaves.

It is found in the plastid. The protein resides in the chloroplast. The catalysed reaction is (9Z,12Z,15Z)-octadecatrienoate + O2 = 13-hydroperoxy-(9Z,11E,15Z)-octadecatrienoate. It functions in the pathway lipid metabolism; oxylipin biosynthesis. It participates in isoprenoid biosynthesis. Component of the monoterpenoid pyrethrins biosynthesis; pyrethrins are widely used plant-derived pesticide. Plant lipoxygenases may be involved in a number of diverse aspects of plant physiology including growth and development, pest resistance, and senescence or responses to wounding. Catalyzes the hydroperoxidation of lipids containing a cis,cis-1,4-pentadiene structure. Mediates the peroxidation of linolenic acid leading to the production of 13-hydroperoxylinolenic acid. The sequence is that of Lipoxygenase 1, chloroplastic from Tanacetum cinerariifolium (Dalmatian daisy).